The primary structure comprises 407 residues: Actinorhodin polyketide putative beta-ketoacyl synthase 2 (407 aa).

In terms of domain architecture, Ketosynthase family 3 (KS3) spans 1–402; sequence MSVLITGVGV…GFNSAAVLRR (402 aa).

Belongs to the thiolase-like superfamily. Beta-ketoacyl-ACP synthases family.

The sequence is that of Actinorhodin polyketide putative beta-ketoacyl synthase 2 from Streptomyces coelicolor (strain ATCC BAA-471 / A3(2) / M145).